The following is a 1088-amino-acid chain: DNA polymerase II large subunit (1088 aa).

This sequence belongs to the archaeal DNA polymerase II family. Heterodimer of a large subunit and a small subunit.

The enzyme catalyses DNA(n) + a 2'-deoxyribonucleoside 5'-triphosphate = DNA(n+1) + diphosphate. It catalyses the reaction Exonucleolytic cleavage in the 3'- to 5'-direction to yield nucleoside 5'-phosphates.. In terms of biological role, possesses two activities: a DNA synthesis (polymerase) and an exonucleolytic activity that degrades single-stranded DNA in the 3'- to 5'-direction. Has a template-primer preference which is characteristic of a replicative DNA polymerase. The sequence is that of DNA polymerase II large subunit (polC) from Thermoplasma volcanium (strain ATCC 51530 / DSM 4299 / JCM 9571 / NBRC 15438 / GSS1).